The primary structure comprises 182 residues: Large ribosomal subunit protein uL5c (182 aa).

It belongs to the universal ribosomal protein uL5 family. In terms of assembly, part of the 50S ribosomal subunit; contacts the 5S rRNA.

The protein resides in the plastid. It localises to the chloroplast. Its function is as follows. Binds 5S rRNA, forms part of the central protuberance of the 50S subunit. The sequence is that of Large ribosomal subunit protein uL5c (rpl5) from Emiliania huxleyi (Coccolithophore).